The following is a 179-amino-acid chain: ATP-dependent protease subunit HslV (179 aa).

Threonine 9 is an active-site residue. Na(+)-binding residues include alanine 164, cysteine 167, and threonine 170.

This sequence belongs to the peptidase T1B family. HslV subfamily. A double ring-shaped homohexamer of HslV is capped on each side by a ring-shaped HslU homohexamer. The assembly of the HslU/HslV complex is dependent on binding of ATP.

It localises to the cytoplasm. It catalyses the reaction ATP-dependent cleavage of peptide bonds with broad specificity.. With respect to regulation, allosterically activated by HslU binding. Its function is as follows. Protease subunit of a proteasome-like degradation complex believed to be a general protein degrading machinery. This Syntrophobacter fumaroxidans (strain DSM 10017 / MPOB) protein is ATP-dependent protease subunit HslV.